Reading from the N-terminus, the 397-residue chain is Succinate--CoA ligase [ADP-forming] subunit beta (397 aa).

An ATP-grasp domain is found at 9–254; sequence KALLKSFGAP…TTEEDEKEIE (246 aa). Residues K46, 53–55, E109, A112, and E117 contribute to the ATP site; that span reads GRG. 2 residues coordinate Mg(2+): N209 and D223. Substrate is bound by residues N274 and 331 to 333; that span reads GIM.

Belongs to the succinate/malate CoA ligase beta subunit family. Heterotetramer of two alpha and two beta subunits. It depends on Mg(2+) as a cofactor.

It catalyses the reaction succinate + ATP + CoA = succinyl-CoA + ADP + phosphate. The catalysed reaction is GTP + succinate + CoA = succinyl-CoA + GDP + phosphate. It participates in carbohydrate metabolism; tricarboxylic acid cycle; succinate from succinyl-CoA (ligase route): step 1/1. In terms of biological role, succinyl-CoA synthetase functions in the citric acid cycle (TCA), coupling the hydrolysis of succinyl-CoA to the synthesis of either ATP or GTP and thus represents the only step of substrate-level phosphorylation in the TCA. The beta subunit provides nucleotide specificity of the enzyme and binds the substrate succinate, while the binding sites for coenzyme A and phosphate are found in the alpha subunit. This Mesorhizobium japonicum (strain LMG 29417 / CECT 9101 / MAFF 303099) (Mesorhizobium loti (strain MAFF 303099)) protein is Succinate--CoA ligase [ADP-forming] subunit beta.